Here is a 315-residue protein sequence, read N- to C-terminus: Probable carboxylesterase 3 (315 aa).

Met1 is modified (N-acetylmethionine). An Involved in the stabilization of the negatively charged intermediate by the formation of the oxyanion hole motif is present at residues 81 to 83 (HGG). Catalysis depends on residues Ser160, Asp258, and His290.

This sequence belongs to the 'GDXG' lipolytic enzyme family. Expressed in flowers and siliques.

It carries out the reaction a carboxylic ester + H2O = an alcohol + a carboxylate + H(+). Carboxylesterase acting on esters with varying acyl chain length. This Arabidopsis thaliana (Mouse-ear cress) protein is Probable carboxylesterase 3 (CXE3).